We begin with the raw amino-acid sequence, 312 residues long: Methionyl-tRNA formyltransferase (312 aa).

111 to 114 (SLLP) contributes to the (6S)-5,6,7,8-tetrahydrofolate binding site.

It belongs to the Fmt family.

The enzyme catalyses L-methionyl-tRNA(fMet) + (6R)-10-formyltetrahydrofolate = N-formyl-L-methionyl-tRNA(fMet) + (6S)-5,6,7,8-tetrahydrofolate + H(+). In terms of biological role, attaches a formyl group to the free amino group of methionyl-tRNA(fMet). The formyl group appears to play a dual role in the initiator identity of N-formylmethionyl-tRNA by promoting its recognition by IF2 and preventing the misappropriation of this tRNA by the elongation apparatus. The chain is Methionyl-tRNA formyltransferase from Rhodopseudomonas palustris (strain HaA2).